The chain runs to 134 residues: Transmembrane protein 100 (134 aa).

2 helical membrane-spanning segments follow: residues 56–76 (CIIP…AVAY) and 84–104 (IISI…ASSA). Serine 121 is subject to Phosphoserine.

As to quaternary structure, interacts (via C-terminus) with TRPA1 and TRPV1. Interacts with TASOR. Expressed in neurons of the myenteric and submucosal plexuses in the gastric body, jejunum and proximal colon. Expressed in arterial endothelial cells and neurons of the central nervous system and peripheral nervous system. Expressed in umbilical artery endothelial cells (at protein level).

It localises to the cell membrane. Its subcellular location is the membrane. The protein localises to the perikaryon. It is found in the cytoplasm. The protein resides in the perinuclear region. It localises to the endoplasmic reticulum. Plays a role during embryonic arterial endothelium differentiation and vascular morphogenesis through the ACVRL1 receptor-dependent signaling pathway upon stimulation by bone morphogenetic proteins, such as GDF2/BMP9 and BMP10. Involved in the regulation of nociception, acting as a modulator of the interaction between TRPA1 and TRPV1, two molecular sensors and mediators of pain signals in dorsal root ganglia (DRG) neurons. Mechanistically, it weakens their interaction, thereby releasing the inhibition of TRPA1 by TRPV1 and increasing the single-channel open probability of the TRPA1-TRPV1 complex. In Homo sapiens (Human), this protein is Transmembrane protein 100 (TMEM100).